Reading from the N-terminus, the 447-residue chain is ATP-dependent protease ATPase subunit HslU (447 aa).

ATP is bound by residues isoleucine 18, glycine 60–glutamate 65, aspartate 259, glutamate 325, and arginine 397.

Belongs to the ClpX chaperone family. HslU subfamily. In terms of assembly, a double ring-shaped homohexamer of HslV is capped on each side by a ring-shaped HslU homohexamer. The assembly of the HslU/HslV complex is dependent on binding of ATP.

It is found in the cytoplasm. Functionally, ATPase subunit of a proteasome-like degradation complex; this subunit has chaperone activity. The binding of ATP and its subsequent hydrolysis by HslU are essential for unfolding of protein substrates subsequently hydrolyzed by HslV. HslU recognizes the N-terminal part of its protein substrates and unfolds these before they are guided to HslV for hydrolysis. The protein is ATP-dependent protease ATPase subunit HslU of Burkholderia thailandensis (strain ATCC 700388 / DSM 13276 / CCUG 48851 / CIP 106301 / E264).